A 267-amino-acid chain; its full sequence is Shikimate dehydrogenase (NADP(+)) (267 aa).

Shikimate-binding positions include 14-16 (SLS) and Thr61. Lys65 (proton acceptor) is an active-site residue. Shikimate is bound by residues Asn86 and Asp101. NADP(+) contacts are provided by residues 126 to 130 (GAGGA), 150 to 155 (NRTPFK), and Leu213. Residue Tyr215 participates in shikimate binding. NADP(+) is bound at residue Gly236.

It belongs to the shikimate dehydrogenase family. Homodimer.

The catalysed reaction is shikimate + NADP(+) = 3-dehydroshikimate + NADPH + H(+). Its pathway is metabolic intermediate biosynthesis; chorismate biosynthesis; chorismate from D-erythrose 4-phosphate and phosphoenolpyruvate: step 4/7. Involved in the biosynthesis of the chorismate, which leads to the biosynthesis of aromatic amino acids. Catalyzes the reversible NADPH linked reduction of 3-dehydroshikimate (DHSA) to yield shikimate (SA). This Ruthia magnifica subsp. Calyptogena magnifica protein is Shikimate dehydrogenase (NADP(+)).